We begin with the raw amino-acid sequence, 318 residues long: Protein phosphatase 1 regulatory subunit 3C (318 aa).

Positions 84-87 match the PP1-binding motif motif; sequence RVVF. Residues 141–263 are interaction with EPM2A; that stretch reads PSADYLSFRN…YRIVHVQWKP (123 aa). The CBM21 domain occupies 149–257; that stretch reads RNHFQKNSVC…NNEGQNYRIV (109 aa).

Interacts with PPP1CC catalytic subunit of PP1 and associates with glycogen. Forms complexes with glycogen phosphorylase, glycogen synthase and phosphorylase kinase which is necessary for its regulation of PP1 activity. Also interacts with EPM2A/laforin. In terms of processing, ubiquitinated by NHLRC1/malin in a EPM2A/laforin-dependent manner.

In terms of biological role, acts as a glycogen-targeting subunit for PP1 and regulates its activity. Activates glycogen synthase, reduces glycogen phosphorylase activity and limits glycogen breakdown. Dramatically increases basal and insulin-stimulated glycogen synthesis upon overexpression in a variety of cell types. The sequence is that of Protein phosphatase 1 regulatory subunit 3C from Bos taurus (Bovine).